The following is a 181-amino-acid chain: Small ribosomal subunit protein uS4 (181 aa).

In terms of domain architecture, S4 RNA-binding spans 104 to 166 (RRLQTIVYKK…VTSSFKSRPP (63 aa)).

It belongs to the universal ribosomal protein uS4 family. In terms of assembly, part of the 30S ribosomal subunit. Contacts protein S5. The interaction surface between S4 and S5 is involved in control of translational fidelity.

In terms of biological role, one of the primary rRNA binding proteins, it binds directly to 16S rRNA where it nucleates assembly of the body of the 30S subunit. With S5 and S12 plays an important role in translational accuracy. The polypeptide is Small ribosomal subunit protein uS4 (Saccharolobus islandicus (strain Y.N.15.51 / Yellowstone #2) (Sulfolobus islandicus)).